Here is a 468-residue protein sequence, read N- to C-terminus: Protein NEN1 (468 aa).

Positions 11-172 (FFDVETTVPK…DDVRMNLEVL (162 aa)) constitute an Exonuclease domain. Aspartate 13 and glutamate 15 together coordinate Mg(2+). The active-site Proton donor/acceptor is the histidine 159. Aspartate 164 serves as a coordination point for Mg(2+).

It depends on Mg(2+) as a cofactor. As to expression, expressed in the sieve elements and phloem pole pericycle cells.

The protein resides in the cytoplasm. Its subcellular location is the nucleus. Its function is as follows. Probable exonuclease involved in enuclation of sieve elements. The chain is Protein NEN1 from Arabidopsis thaliana (Mouse-ear cress).